Here is a 206-residue protein sequence, read N- to C-terminus: Cytidylate kinase (206 aa).

9–17 (GPAAAGKGT) provides a ligand contact to ATP. Over residues 155-168 (LRERDRRDREREAA) the composition is skewed to basic and acidic residues. The segment at 155–174 (LRERDRRDREREAAPLRPAP) is disordered.

It belongs to the cytidylate kinase family. Type 1 subfamily.

It is found in the cytoplasm. It carries out the reaction CMP + ATP = CDP + ADP. The catalysed reaction is dCMP + ATP = dCDP + ADP. The sequence is that of Cytidylate kinase from Cereibacter sphaeroides (strain KD131 / KCTC 12085) (Rhodobacter sphaeroides).